The chain runs to 225 residues: Glutathione S-transferase Mu 3 (225 aa).

The region spanning serine 5–glycine 92 is the GST N-terminal domain. Glutathione-binding positions include tyrosine 11–tryptophan 12, tryptophan 50–lysine 54, and asparagine 63–leucine 64. Lysine 54 participates in a covalent cross-link: Glycyl lysine isopeptide (Lys-Gly) (interchain with G-Cter in SUMO2). A Glycyl lysine isopeptide (Lys-Gly) (interchain with G-Cter in SUMO2) cross-link involves residue lysine 73. Glutamine 76–serine 77 contributes to the glutathione binding site. A GST C-terminal domain is found at threonine 94–isoleucine 212. Residue tyrosine 120 participates in substrate binding.

It belongs to the GST superfamily. Mu family. In terms of assembly, homodimer. Post-translationally, the N-terminus is blocked. Testis and brain.

It is found in the cytoplasm. It carries out the reaction RX + glutathione = an S-substituted glutathione + a halide anion + H(+). In terms of biological role, conjugation of reduced glutathione to a wide number of exogenous and endogenous hydrophobic electrophiles. May govern uptake and detoxification of both endogenous compounds and xenobiotics at the testis and brain blood barriers. The polypeptide is Glutathione S-transferase Mu 3 (GSTM3) (Homo sapiens (Human)).